Consider the following 166-residue polypeptide: Small ribosomal subunit protein uS5 (166 aa).

The S5 DRBM domain maps to 12 to 75 (YIEKLVQVNR…EAARRNMIQV (64 aa)).

The protein belongs to the universal ribosomal protein uS5 family. In terms of assembly, part of the 30S ribosomal subunit. Contacts proteins S4 and S8.

In terms of biological role, with S4 and S12 plays an important role in translational accuracy. Located at the back of the 30S subunit body where it stabilizes the conformation of the head with respect to the body. The protein is Small ribosomal subunit protein uS5 of Pseudomonas fluorescens (strain Pf0-1).